The sequence spans 339 residues: Dihydroorotase (339 aa).

Residues histidine 12 and histidine 14 each contribute to the Zn(2+) site. Substrate is bound by residues 14 to 16 and asparagine 40; that span reads HVR. Residues lysine 94, histidine 133, histidine 167, and aspartate 239 each coordinate Zn(2+). Lysine 94 is subject to N6-carboxylysine. Histidine 133 contributes to the substrate binding site. Residue aspartate 239 is part of the active site. Substrate is bound by residues histidine 243 and alanine 255.

It belongs to the metallo-dependent hydrolases superfamily. DHOase family. Class II DHOase subfamily. In terms of assembly, homodimer. Zn(2+) is required as a cofactor.

It catalyses the reaction (S)-dihydroorotate + H2O = N-carbamoyl-L-aspartate + H(+). Its pathway is pyrimidine metabolism; UMP biosynthesis via de novo pathway; (S)-dihydroorotate from bicarbonate: step 3/3. Catalyzes the reversible cyclization of carbamoyl aspartate to dihydroorotate. The chain is Dihydroorotase from Helicobacter pylori (strain HPAG1).